The primary structure comprises 135 residues: Small ribosomal subunit protein uS11 (135 aa).

This sequence belongs to the universal ribosomal protein uS11 family. In terms of assembly, part of the 30S ribosomal subunit. Interacts with proteins S7 and S18. Binds to IF-3.

Functionally, located on the platform of the 30S subunit, it bridges several disparate RNA helices of the 16S rRNA. Forms part of the Shine-Dalgarno cleft in the 70S ribosome. The sequence is that of Small ribosomal subunit protein uS11 from Solibacter usitatus (strain Ellin6076).